We begin with the raw amino-acid sequence, 314 residues long: 2,3-dihydroxyphenylpropionate/2,3-dihydroxicinnamic acid 1,2-dioxygenase (314 aa).

The active-site Proton donor is the H115. Catalysis depends on H179, which acts as the Proton acceptor.

It belongs to the LigB/MhpB extradiol dioxygenase family. In terms of assembly, homotetramer. It depends on Fe(2+) as a cofactor.

The enzyme catalyses 3-(2,3-dihydroxyphenyl)propanoate + O2 = (2Z,4E)-2-hydroxy-6-oxonona-2,4-dienedioate + H(+). It carries out the reaction (2E)-3-(2,3-dihydroxyphenyl)prop-2-enoate + O2 = (2Z,4E,7E)-2-hydroxy-6-oxonona-2,4,7-trienedioate + H(+). It participates in aromatic compound metabolism; 3-phenylpropanoate degradation. Functionally, catalyzes the non-heme iron(II)-dependent oxidative cleavage of 2,3-dihydroxyphenylpropionic acid and 2,3-dihydroxicinnamic acid into 2-hydroxy-6-ketononadienedioate and 2-hydroxy-6-ketononatrienedioate, respectively. This chain is 2,3-dihydroxyphenylpropionate/2,3-dihydroxicinnamic acid 1,2-dioxygenase, found in Rhodococcus globerulus.